The sequence spans 364 residues: Histidinol-phosphate aminotransferase (364 aa).

Lysine 226 bears the N6-(pyridoxal phosphate)lysine mark.

The protein belongs to the class-II pyridoxal-phosphate-dependent aminotransferase family. Histidinol-phosphate aminotransferase subfamily. As to quaternary structure, homodimer. It depends on pyridoxal 5'-phosphate as a cofactor.

The catalysed reaction is L-histidinol phosphate + 2-oxoglutarate = 3-(imidazol-4-yl)-2-oxopropyl phosphate + L-glutamate. The protein operates within amino-acid biosynthesis; L-histidine biosynthesis; L-histidine from 5-phospho-alpha-D-ribose 1-diphosphate: step 7/9. The polypeptide is Histidinol-phosphate aminotransferase (Campylobacter jejuni (strain RM1221)).